The primary structure comprises 340 residues: Uroporphyrinogen decarboxylase (340 aa).

Substrate is bound by residues 21–25, Phe-40, Asp-71, Tyr-147, Ser-202, and His-316; that span reads RQAGR.

The protein belongs to the uroporphyrinogen decarboxylase family. Homodimer.

It is found in the cytoplasm. The enzyme catalyses uroporphyrinogen III + 4 H(+) = coproporphyrinogen III + 4 CO2. The protein operates within porphyrin-containing compound metabolism; protoporphyrin-IX biosynthesis; coproporphyrinogen-III from 5-aminolevulinate: step 4/4. Its function is as follows. Catalyzes the decarboxylation of four acetate groups of uroporphyrinogen-III to yield coproporphyrinogen-III. The sequence is that of Uroporphyrinogen decarboxylase from Helicobacter hepaticus (strain ATCC 51449 / 3B1).